Consider the following 438-residue polypeptide: 3-phosphoshikimate 1-carboxyvinyltransferase (438 aa).

3-phosphoshikimate is bound by residues Lys25, Ser26, and Arg30. A phosphoenolpyruvate-binding site is contributed by Lys25. Gly99 and Arg128 together coordinate phosphoenolpyruvate. 3-phosphoshikimate is bound by residues Ser173, Gln175, Asp325, and Lys352. Gln175 lines the phosphoenolpyruvate pocket. Asp325 functions as the Proton acceptor in the catalytic mechanism. Residues Arg356 and Arg398 each contribute to the phosphoenolpyruvate site.

The protein belongs to the EPSP synthase family. In terms of assembly, monomer.

It is found in the cytoplasm. The catalysed reaction is 3-phosphoshikimate + phosphoenolpyruvate = 5-O-(1-carboxyvinyl)-3-phosphoshikimate + phosphate. It functions in the pathway metabolic intermediate biosynthesis; chorismate biosynthesis; chorismate from D-erythrose 4-phosphate and phosphoenolpyruvate: step 6/7. Functionally, catalyzes the transfer of the enolpyruvyl moiety of phosphoenolpyruvate (PEP) to the 5-hydroxyl of shikimate-3-phosphate (S3P) to produce enolpyruvyl shikimate-3-phosphate and inorganic phosphate. The sequence is that of 3-phosphoshikimate 1-carboxyvinyltransferase from Prochlorococcus marinus subsp. pastoris (strain CCMP1986 / NIES-2087 / MED4).